The primary structure comprises 602 residues: Alpha-(1-&gt;6)-mannopyranosyltransferase B (602 aa).

A run of 13 helical transmembrane segments spans residues 105–125 (IGTM…ALPV), 148–168 (MIVL…APLV), 190–210 (TFGA…QDIY), 244–264 (VPFI…SIAA), 274–294 (IVGG…AAGW), 320–340 (LILH…FLLV), 368–388 (GVLI…LGFV), 404–424 (VVAI…TVVV), 448–468 (WMSM…NLGL), 472–492 (TAAM…AFMV), 503–523 (IHAV…FPVV), 546–566 (LGVI…GLAL), and 571–591 (VFSI…VGWW).

The protein belongs to the MptA/B family.

The protein resides in the membrane. The protein operates within cell wall biogenesis; cell wall polysaccharide biosynthesis. Involved in the initiation of core alpha-(1-&gt;6) mannan biosynthesis of lipomannan (LM-A) and multi-mannosylated polymer (LM-B), extending triacylatedphosphatidyl-myo-inositol dimannoside (Ac1PIM2) and mannosylated glycolipid, 1,2-di-O-C16/C18:1-(alpha-D-mannopyranosyl)-(1-&gt;4)-(alpha-D-glucopyranosyluronic acid)-(1-&gt;3)-glycerol (Man1GlcAGroAc2), respectively. Catalyzes the addition of alpha-(1-&gt;6)-mannose residue. This Corynebacterium glutamicum (strain ATCC 13032 / DSM 20300 / JCM 1318 / BCRC 11384 / CCUG 27702 / LMG 3730 / NBRC 12168 / NCIMB 10025 / NRRL B-2784 / 534) protein is Alpha-(1-&gt;6)-mannopyranosyltransferase B (mptB).